Here is a 266-residue protein sequence, read N- to C-terminus: Gasdermin bGSDM (266 aa).

Transmembrane regions (beta stranded) follow at residues 65–81, 93–113, 162–181, and 187–203; these read FSGQ…GADL, EDKL…FAYE, QFTV…EAAV, and AHAS…SLQT. The tract at residues 248–266 is C-terminal region; that stretch reads GEEDFSVQPLQAPSGLLKL.

Belongs to the bacterial gasdermin family. As to quaternary structure, monomer. In terms of assembly, forms large, homooligomeric ring-shaped pores when inserted in membranes.

The protein localises to the cytoplasm. The protein resides in the cell membrane. Its activity is regulated as follows. The full-length protein before cleavage is inactive: intramolecular interactions between the N-terminal domain and the C-terminal region mediate autoinhibition. The pyroptosis-like-inducing activity is carried by the released N-terminal domain (Gasdermin bGSDM, N-terminus). In terms of biological role, precursor of a pore-forming protein involved in defense against bacteriophages. Cleavage of this precursor by its dedicated protease releases the active moiety (gasdermin bGSDM, N-terminus) which inserts into membranes, forming pores and triggering cell death. Expression of bGSDM and the neighboring protease gene (Ga0307981_100051430) is highly toxic in E.coli. Functionally, pore-forming protein that causes membrane permeabilization via a pyroptosis-like activity. This is the active form which makes ring-like pores with an interior pore diameter of 130-190 Angstroms, when integrated in liposomes. In Unknown prokaryotic organism, this protein is Gasdermin bGSDM.